Here is a 347-residue protein sequence, read N- to C-terminus: Methylthioribose-1-phosphate isomerase (347 aa).

Substrate contacts are provided by residues 45 to 47, R88, and Q197; that span reads RGA. D238 serves as the catalytic Proton donor. 248–249 is a substrate binding site; sequence NK.

This sequence belongs to the eIF-2B alpha/beta/delta subunits family. MtnA subfamily.

The enzyme catalyses 5-(methylsulfanyl)-alpha-D-ribose 1-phosphate = 5-(methylsulfanyl)-D-ribulose 1-phosphate. The protein operates within amino-acid biosynthesis; L-methionine biosynthesis via salvage pathway; L-methionine from S-methyl-5-thio-alpha-D-ribose 1-phosphate: step 1/6. Catalyzes the interconversion of methylthioribose-1-phosphate (MTR-1-P) into methylthioribulose-1-phosphate (MTRu-1-P). This chain is Methylthioribose-1-phosphate isomerase, found in Nostoc sp. (strain PCC 7120 / SAG 25.82 / UTEX 2576).